Consider the following 161-residue polypeptide: Pathogenesis-related protein 1 (161 aa).

Positions 1-26 (MKVTSYSRILIILAALVGALVVPLKA) are cleaved as a signal peptide. The region spanning 34 to 149 (VNAHNQARSQ…NGGTIISCNY (116 aa)) is the SCP domain. Disulfide bonds link cysteine 70/cysteine 138, cysteine 113/cysteine 117, and cysteine 133/cysteine 147.

It belongs to the CRISP family. In terms of tissue distribution, expressed in flowers, stems and roots but not in leaves.

Functionally, probably involved in the defense reaction of plants against pathogens. This chain is Pathogenesis-related protein 1, found in Arabidopsis thaliana (Mouse-ear cress).